The sequence spans 285 residues: 2-dehydro-3-deoxyphosphooctonate aldolase (285 aa).

This sequence belongs to the KdsA family.

The protein resides in the cytoplasm. The catalysed reaction is D-arabinose 5-phosphate + phosphoenolpyruvate + H2O = 3-deoxy-alpha-D-manno-2-octulosonate-8-phosphate + phosphate. It functions in the pathway carbohydrate biosynthesis; 3-deoxy-D-manno-octulosonate biosynthesis; 3-deoxy-D-manno-octulosonate from D-ribulose 5-phosphate: step 2/3. The protein operates within bacterial outer membrane biogenesis; lipopolysaccharide biosynthesis. This is 2-dehydro-3-deoxyphosphooctonate aldolase from Acinetobacter baumannii (strain AB307-0294).